A 323-amino-acid chain; its full sequence is HPr kinase/phosphorylase (323 aa).

Catalysis depends on residues histidine 142 and lysine 163. 157–164 (GESGVGKS) lines the ATP pocket. Serine 164 contacts Mg(2+). Catalysis depends on aspartate 181, which acts as the Proton acceptor; for phosphorylation activity. Proton donor; for dephosphorylation activity. The important for the catalytic mechanism of both phosphorylation and dephosphorylation stretch occupies residues 205-214 (LEVRGLGMLN). Residue glutamate 206 participates in Mg(2+) binding. The active site involves arginine 249. An important for the catalytic mechanism of dephosphorylation region spans residues 270-275 (PVAAGR).

This sequence belongs to the HPrK/P family. In terms of assembly, homohexamer. The cofactor is Mg(2+).

The enzyme catalyses [HPr protein]-L-serine + ATP = [HPr protein]-O-phospho-L-serine + ADP + H(+). The catalysed reaction is [HPr protein]-O-phospho-L-serine + phosphate + H(+) = [HPr protein]-L-serine + diphosphate. Functionally, catalyzes the ATP- as well as the pyrophosphate-dependent phosphorylation of a specific serine residue in HPr, a phosphocarrier protein of the phosphoenolpyruvate-dependent sugar phosphotransferase system (PTS). HprK/P also catalyzes the pyrophosphate-producing, inorganic phosphate-dependent dephosphorylation (phosphorolysis) of seryl-phosphorylated HPr (P-Ser-HPr). This chain is HPr kinase/phosphorylase, found in Nitrosomonas europaea (strain ATCC 19718 / CIP 103999 / KCTC 2705 / NBRC 14298).